We begin with the raw amino-acid sequence, 117 residues long: Large ribosomal subunit protein bL20c (117 aa).

It belongs to the bacterial ribosomal protein bL20 family.

The protein resides in the plastid. Its subcellular location is the chloroplast. In terms of biological role, binds directly to 23S ribosomal RNA and is necessary for the in vitro assembly process of the 50S ribosomal subunit. It is not involved in the protein synthesizing functions of that subunit. The sequence is that of Large ribosomal subunit protein bL20c from Acorus gramineus (Dwarf sweet flag).